Reading from the N-terminus, the 151-residue chain is 1,4-dihydroxy-2-naphthoyl-CoA hydrolase (151 aa).

Asp-19 is an active-site residue.

This sequence belongs to the 4-hydroxybenzoyl-CoA thioesterase family. DHNA-CoA hydrolase subfamily.

The catalysed reaction is 1,4-dihydroxy-2-naphthoyl-CoA + H2O = 1,4-dihydroxy-2-naphthoate + CoA + H(+). Its pathway is cofactor biosynthesis; phylloquinone biosynthesis. It participates in quinol/quinone metabolism; 1,4-dihydroxy-2-naphthoate biosynthesis; 1,4-dihydroxy-2-naphthoate from chorismate: step 7/7. In terms of biological role, catalyzes the hydrolysis of 1,4-dihydroxy-2-naphthoyl-CoA (DHNA-CoA) to 1,4-dihydroxy-2-naphthoate (DHNA), a reaction involved in phylloquinone (vitamin K1) biosynthesis. This chain is 1,4-dihydroxy-2-naphthoyl-CoA hydrolase, found in Prochlorococcus marinus (strain MIT 9313).